Consider the following 385-residue polypeptide: Cell division protein FtsZ (385 aa).

Residues 20–24 (GGGGN), 107–109 (GTG), Glu138, Arg142, and Asn186 contribute to the GTP site.

It belongs to the FtsZ family. Homodimer. Polymerizes to form a dynamic ring structure in a strictly GTP-dependent manner. Interacts directly with several other division proteins.

It localises to the cytoplasm. Essential cell division protein that forms a contractile ring structure (Z ring) at the future cell division site. The regulation of the ring assembly controls the timing and the location of cell division. One of the functions of the FtsZ ring is to recruit other cell division proteins to the septum to produce a new cell wall between the dividing cells. Binds GTP and shows GTPase activity. In Buchnera aphidicola subsp. Baizongia pistaciae (strain Bp), this protein is Cell division protein FtsZ.